The primary structure comprises 88 residues: Large ribosomal subunit protein eL34 (88 aa).

The protein belongs to the eukaryotic ribosomal protein eL34 family.

This is Large ribosomal subunit protein eL34 from Methanobrevibacter smithii (strain ATCC 35061 / DSM 861 / OCM 144 / PS).